The primary structure comprises 289 residues: Pyridoxal kinase PdxY (289 aa).

Substrate contacts are provided by residues S9 and 44–45 (TQ). Residues D112, V144, E149, and K182 each coordinate ATP. D221 is a binding site for substrate.

The protein belongs to the pyridoxine kinase family. PdxY subfamily. Homodimer. It depends on Mg(2+) as a cofactor.

It carries out the reaction pyridoxal + ATP = pyridoxal 5'-phosphate + ADP + H(+). It participates in cofactor metabolism; pyridoxal 5'-phosphate salvage; pyridoxal 5'-phosphate from pyridoxal: step 1/1. Functionally, pyridoxal kinase involved in the salvage pathway of pyridoxal 5'-phosphate (PLP). Catalyzes the phosphorylation of pyridoxal to PLP. The protein is Pyridoxal kinase PdxY of Vibrio parahaemolyticus serotype O3:K6 (strain RIMD 2210633).